A 237-amino-acid chain; its full sequence is Thrombin-like enzyme agkihpin-1 (237 aa).

Methionine 1 is a propeptide. The region spanning 2–228 (ILGDDECNIN…HLDWIENIIA (227 aa)) is the Peptidase S1 domain. Cysteines 27 and 43 form a disulfide. Histidine 42 (charge relay system) is an active-site residue. Asparagine 80 carries an N-linked (GlcNAc...) asparagine glycan. Residue aspartate 87 is the Charge relay system of the active site. 3 cysteine pairs are disulfide-bonded: cysteine 119–cysteine 189, cysteine 151–cysteine 168, and cysteine 179–cysteine 204. Catalysis depends on serine 183, which acts as the Charge relay system.

Belongs to the peptidase S1 family. Snake venom subfamily. Expressed by the venom gland.

The protein resides in the secreted. Its activity is regulated as follows. The hydrolysis of TAMe (tosyl-arginine methyl ester) substrate is activated by Ca(2+), Fe(3+), Mg(2+) and Zn(2+), and inhibited by EDTA, PMSF and DTT. Thrombin-like enzyme that shows fibrinogenolytic activity against bovine fibrinogen alpha and beta chains, but not gamma chain. Hydrolyzes fibrin. Enhances ADP-induced human platelet aggregation. Has arginine esterase activity for TAMe (tosyl-arginine methyl ester) substrate. Reduces thrombin-induced thrombosis. Does not have hemorrhagic activity. Reduces the motility of human liver cancer HepG2 cells in a wound-healing assay. The polypeptide is Thrombin-like enzyme agkihpin-1 (Gloydius halys (Chinese water mocassin)).